Here is a 394-residue protein sequence, read N- to C-terminus: Elongation factor Tu 2 (394 aa).

The tr-type G domain maps to 10 to 204 (KPHVNVGTIG…HLDTYIPEPE (195 aa)). The tract at residues 19–26 (GHVDHGKT) is G1. 19-26 (GHVDHGKT) lines the GTP pocket. Threonine 26 contributes to the Mg(2+) binding site. Residues 60–64 (GITIN) are G2. Residues 81 to 84 (DCPG) are G3. GTP is bound by residues 81-85 (DCPGH) and 136-139 (NKCD). The interval 136–139 (NKCD) is G4. The G5 stretch occupies residues 174-176 (SAL).

This sequence belongs to the TRAFAC class translation factor GTPase superfamily. Classic translation factor GTPase family. EF-Tu/EF-1A subfamily. As to quaternary structure, monomer.

It localises to the cytoplasm. The enzyme catalyses GTP + H2O = GDP + phosphate + H(+). Its function is as follows. GTP hydrolase that promotes the GTP-dependent binding of aminoacyl-tRNA to the A-site of ribosomes during protein biosynthesis. In Haemophilus influenzae (strain 86-028NP), this protein is Elongation factor Tu 2.